Consider the following 122-residue polypeptide: Large ribosomal subunit protein uL14 (122 aa).

It belongs to the universal ribosomal protein uL14 family. In terms of assembly, part of the 50S ribosomal subunit. Forms a cluster with proteins L3 and L19. In the 70S ribosome, L14 and L19 interact and together make contacts with the 16S rRNA in bridges B5 and B8.

Its function is as follows. Binds to 23S rRNA. Forms part of two intersubunit bridges in the 70S ribosome. This chain is Large ribosomal subunit protein uL14, found in Pseudothermotoga lettingae (strain ATCC BAA-301 / DSM 14385 / NBRC 107922 / TMO) (Thermotoga lettingae).